A 481-amino-acid chain; its full sequence is Glutamate--glyoxylate aminotransferase 2 (481 aa).

Lys291 is subject to N6-(pyridoxal phosphate)lysine. A Peroxisomal targeting signal motif is present at residues Ser479 to Met481.

It belongs to the class-I pyridoxal-phosphate-dependent aminotransferase family. Alanine aminotransferase subfamily. Homodimer. The cofactor is pyridoxal 5'-phosphate. The N-terminus is blocked. Expressed at low levels in seedlings, leaves, flowers, roots, and green siliques.

It localises to the peroxisome. The enzyme catalyses L-alanine + 2-oxoglutarate = pyruvate + L-glutamate. It carries out the reaction glyoxylate + L-alanine = glycine + pyruvate. It catalyses the reaction glycine + 2-oxoglutarate = glyoxylate + L-glutamate. The protein operates within photosynthesis; C4 acid pathway. Its pathway is amino-acid degradation; L-alanine degradation via transaminase pathway; pyruvate from L-alanine: step 1/1. Functionally, catalyzes the Glu:glyoxylate aminotransferase (GGT), Ala:glyoxylate aminotransferase (AGT), Ala:2-oxoglutarate aminotransferase (AKT) and Glu:pyruvate aminotransferase (GPT) reactions in peroxisomes. This Arabidopsis thaliana (Mouse-ear cress) protein is Glutamate--glyoxylate aminotransferase 2 (GGAT2).